We begin with the raw amino-acid sequence, 185 residues long: Ribosome-recycling factor (185 aa).

The protein belongs to the RRF family.

It is found in the cytoplasm. Its function is as follows. Responsible for the release of ribosomes from messenger RNA at the termination of protein biosynthesis. May increase the efficiency of translation by recycling ribosomes from one round of translation to another. The chain is Ribosome-recycling factor from Bacillus licheniformis (strain ATCC 14580 / DSM 13 / JCM 2505 / CCUG 7422 / NBRC 12200 / NCIMB 9375 / NCTC 10341 / NRRL NRS-1264 / Gibson 46).